A 422-amino-acid chain; its full sequence is Glucose-1-phosphate adenylyltransferase (422 aa).

Residues Tyr-108, Gly-173, 188 to 189 (EK), and Ser-206 contribute to the alpha-D-glucose 1-phosphate site.

Belongs to the bacterial/plant glucose-1-phosphate adenylyltransferase family. As to quaternary structure, homotetramer.

It carries out the reaction alpha-D-glucose 1-phosphate + ATP + H(+) = ADP-alpha-D-glucose + diphosphate. It participates in glycan biosynthesis; glycogen biosynthesis. Involved in the biosynthesis of ADP-glucose, a building block required for the elongation reactions to produce glycogen. Catalyzes the reaction between ATP and alpha-D-glucose 1-phosphate (G1P) to produce pyrophosphate and ADP-Glc. This is Glucose-1-phosphate adenylyltransferase from Paraburkholderia phymatum (strain DSM 17167 / CIP 108236 / LMG 21445 / STM815) (Burkholderia phymatum).